We begin with the raw amino-acid sequence, 499 residues long: Glutamyl-tRNA(Gln) amidotransferase subunit A (499 aa).

Residues Lys-76 and Ser-151 each act as charge relay system in the active site. Ser-175 functions as the Acyl-ester intermediate in the catalytic mechanism.

This sequence belongs to the amidase family. GatA subfamily. In terms of assembly, heterotrimer of A, B and C subunits.

It carries out the reaction L-glutamyl-tRNA(Gln) + L-glutamine + ATP + H2O = L-glutaminyl-tRNA(Gln) + L-glutamate + ADP + phosphate + H(+). Its function is as follows. Allows the formation of correctly charged Gln-tRNA(Gln) through the transamidation of misacylated Glu-tRNA(Gln) in organisms which lack glutaminyl-tRNA synthetase. The reaction takes place in the presence of glutamine and ATP through an activated gamma-phospho-Glu-tRNA(Gln). This is Glutamyl-tRNA(Gln) amidotransferase subunit A from Rhodopirellula baltica (strain DSM 10527 / NCIMB 13988 / SH1).